The primary structure comprises 565 residues: Sensor histidine kinase YpdA (565 aa).

The Cytoplasmic portion of the chain corresponds to 1–3; that stretch reads MHE. The chain crosses the membrane as a helical span at residues 4-24; that stretch reads IFNMLLAVFDRAALMLICLFF. At 25–45 the chain is on the periplasmic side; the sequence is LIRIRLFRELLHKSAHSPKEL. A helical membrane pass occupies residues 46-66; that stretch reads LAVTAIFSLFALFSTWSGVPV. The Cytoplasmic segment spans residues 67 to 74; the sequence is EGSLVNVR. Residues 75 to 95 traverse the membrane as a helical segment; the sequence is IIAVMSGGILFGPWVGIITGV. Topologically, residues 96 to 107 are periplasmic; that stretch reads IAGIHRYLIDIG. The chain crosses the membrane as a helical span at residues 108–128; that stretch reads GVTAIPCFITSILAGCISGWI. Topologically, residues 129 to 139 are cytoplasmic; that stretch reads NLKIPKAQRWR. A helical transmembrane segment spans residues 140–160; the sequence is VGILGGMLCETLTMILVIVWA. Residues 161-172 lie on the Periplasmic side of the membrane; that stretch reads PTTALGIDIVSK. A helical transmembrane segment spans residues 173-193; the sequence is IGIPMILGSVCIGFIVLLVQS. The Cytoplasmic segment spans residues 194 to 565; it reads VEGEKEASAA…PVASQATLLL (372 aa). The GAF domain maps to 223–342; it reads VNSESLRKVC…AVGLSQIIST (120 aa). One can recognise a Histidine kinase domain in the interval 343-554; that stretch reads QLEVSRAEQL…EIAFYIPNQR (212 aa). At His371 the chain carries Phosphohistidine; by autocatalysis.

In terms of assembly, interacts with BtsT and YhjX. Post-translationally, autophosphorylated.

It localises to the cell inner membrane. The enzyme catalyses ATP + protein L-histidine = ADP + protein N-phospho-L-histidine.. Member of the two-component regulatory system YpdA/YpdB, which is part of a nutrient-sensing regulatory network composed of YpdA/YpdB, the high-affinity pyruvate signaling system BtsS/BtsR and their respective target proteins, YhjX and BtsT. YpdA activates YpdB by phosphorylation in response to high concentrations of extracellular pyruvate. Activation of the YpdA/YpdB signaling cascade also promotes BtsS/BtsR-mediated btsT expression. The sequence is that of Sensor histidine kinase YpdA (ypdA) from Escherichia coli (strain K12).